The primary structure comprises 247 residues: Probable 2-phosphosulfolactate phosphatase (247 aa).

It belongs to the ComB family. Mg(2+) serves as cofactor.

It catalyses the reaction (2R)-O-phospho-3-sulfolactate + H2O = (2R)-3-sulfolactate + phosphate. The protein is Probable 2-phosphosulfolactate phosphatase of Clostridium perfringens (strain 13 / Type A).